The primary structure comprises 88 residues: Small ribosomal subunit protein bS20 (88 aa).

The disordered stretch occupies residues 1–26; sequence MANTAQARKRARQNTKRRQNSASQRS. The span at 7 to 19 shows a compositional bias: basic residues; that stretch reads ARKRARQNTKRRQ.

Belongs to the bacterial ribosomal protein bS20 family.

In terms of biological role, binds directly to 16S ribosomal RNA. The sequence is that of Small ribosomal subunit protein bS20 from Psychrobacter arcticus (strain DSM 17307 / VKM B-2377 / 273-4).